The primary structure comprises 315 residues: Shiga toxin subunit A (315 aa).

The N-terminal stretch at 1–22 is a signal peptide; the sequence is MKIIIFRVLTFFFVIFSVNVVA. Positions 23–273 are A1; it reads KEFTLDFSTA…CHHHASRVAR (251 aa). The active site involves glutamate 189. Cysteine 264 and cysteine 283 form a disulfide bridge. Positions 274-315 are A2; the sequence is MASDEFPSMCPADGRVRGITHNKILWDSSTLGAILMRRTISS.

It belongs to the ribosome-inactivating protein family. Shiga toxin contains a single subunit A and five copies of subunit B.

The enzyme catalyses Endohydrolysis of the N-glycosidic bond at one specific adenosine on the 28S rRNA.. The A subunit is responsible for inhibiting protein synthesis through the catalytic inactivation of 60S ribosomal subunits. After endocytosis, the A subunit is cleaved by furin in two fragments, A1 and A2: A1 is the catalytically active fragment, and A2 is essential for holotoxin assembly with the B subunits. The sequence is that of Shiga toxin subunit A (stxA) from Shigella sonnei (Shigella sonnei bacteriophage 7888).